Here is a 67-residue protein sequence, read N- to C-terminus: Retron Se72 cold shock-like protein (67 aa).

Positions 1–66 constitute a CSD domain; the sequence is MENGFVNFYD…KGFKAVAIQK (66 aa).

Functionally, probable cold shock-like component of antiviral defense system retron Se72, composed of a non-coding RNA (ncRNA), a reverse transcriptase (RT) and this protein. Expression of retron Se72 confers protection against bacteriophage lambda. At multiplicity of infection (MOI) of 0.02 cultures slow growth when infected with lambda but do not collapse, at MOI 2 cultures enter growth stasis. In Salmonella heidelberg (strain 579083-10), this protein is Retron Se72 cold shock-like protein.